A 388-amino-acid polypeptide reads, in one-letter code: bZIP transcription factor ABI5 homolog (388 aa).

The segment at 1 to 36 is disordered; the sequence is MASEMSKNVKVTDDQEVTSQERDQSGGTKVGGEEEI. Residue serine 44 is modified to Phosphoserine. The bZIP domain maps to 302–365; sequence VERRQRRMIK…KQMLVEKMME (64 aa). The segment at 304 to 323 is basic motif; it reads RRQRRMIKNRESAARSRARK. The leucine-zipper stretch occupies residues 330-344; it reads LEAELNYLKQENARL. A disordered region spans residues 368–388; sequence KEKMNANRGGSQLRRSGSCMW.

This sequence belongs to the bZIP family. ABI5 subfamily. Forms homodimers. Interacts with VP1. Interacts with GF14D. Interacts with PP2C51. Interacts with SAPK2. In terms of processing, phosphorylated at Ser-44 by SAPK6. Expressed in roots, leaves and panicles. Expressed in seeds.

It localises to the nucleus. Transcription factor that possesses transactivation activity in yeast. Involved in abscisic acid (ABA) signaling pathway. Binds to the G-box motif 5'-CACGTG-3' of TRAB1 gene promoter. Involved in the regulation of pollen maturation. May act as negative regulator of salt stress response. Together with PYL5, PP2C30 and SAPK2, is part of an ABA signaling unit that modulates seed germination and early seedling growth. This Oryza sativa subsp. japonica (Rice) protein is bZIP transcription factor ABI5 homolog.